Here is a 210-residue protein sequence, read N- to C-terminus: Prolactin-2 (210 aa).

Residues 1-23 (MARRSQGTKLHLAVLCLVVSCHA) form the signal peptide. 2 cysteine pairs are disulfide-bonded: cysteine 69–cysteine 183 and cysteine 200–cysteine 210.

Belongs to the somatotropin/prolactin family.

Its subcellular location is the secreted. The protein is Prolactin-2 (prl2) of Oncorhynchus keta (Chum salmon).